Consider the following 499-residue polypeptide: Apolipoprotein N-acyltransferase (499 aa).

The next 6 helical transmembrane spans lie at 18 to 38, 50 to 70, 82 to 102, 105 to 125, 156 to 176, and 182 to 202; these read FSPYNFWPASIISIFGLLIIT, LGFLWGIGNFFNEIYWIYISI, IIIILLLSSYLSLYPTIFVIL, FFFPKINFFLFCVGAPSAWMI, PIIGVSGISYILIIISGMCVL, and SYYPIIFIIFIITLTYPLNFF. A CN hydrolase domain is found at 217–461; that stretch reads IQGNISQHTY…NDFLLEEVFS (245 aa). Glu-257 functions as the Proton acceptor in the catalytic mechanism. Lys-320 is a catalytic residue. The active-site Nucleophile is the Cys-372. Residues 476–496 form a helical membrane-spanning segment; the sequence is LLFFSIICFIISFFIKIKLIF.

It belongs to the CN hydrolase family. Apolipoprotein N-acyltransferase subfamily.

It localises to the cell membrane. It catalyses the reaction N-terminal S-1,2-diacyl-sn-glyceryl-L-cysteinyl-[lipoprotein] + a glycerophospholipid = N-acyl-S-1,2-diacyl-sn-glyceryl-L-cysteinyl-[lipoprotein] + a 2-acyl-sn-glycero-3-phospholipid + H(+). It participates in protein modification; lipoprotein biosynthesis (N-acyl transfer). In terms of biological role, catalyzes the phospholipid dependent N-acylation of the N-terminal cysteine of apolipoprotein, the last step in lipoprotein maturation. The sequence is that of Apolipoprotein N-acyltransferase from Wigglesworthia glossinidia brevipalpis.